Here is a 584-residue protein sequence, read N- to C-terminus: UvrABC system protein C (584 aa).

The 78-residue stretch at 12–89 (NKPGCYLFFN…IKKYHPKYNV (78 aa)) folds into the GIY-YIG domain. Residues 194 to 229 (NQVKQTLVKQMQKASDNLQFEQAQRIKDQITSLDFI) enclose the UVR domain.

The protein belongs to the UvrC family. As to quaternary structure, interacts with UvrB in an incision complex.

The protein resides in the cytoplasm. In terms of biological role, the UvrABC repair system catalyzes the recognition and processing of DNA lesions. UvrC both incises the 5' and 3' sides of the lesion. The N-terminal half is responsible for the 3' incision and the C-terminal half is responsible for the 5' incision. This is UvrABC system protein C from Mycoplasma mycoides subsp. mycoides SC (strain CCUG 32753 / NCTC 10114 / PG1).